Here is a 114-residue protein sequence, read N- to C-terminus: Small ribosomal subunit protein eS25 (114 aa).

Residues 1-33 (MAPKKDKAPPPSSKPAKSGGKQKKKKWSKGKQK) form a disordered region. Positions 20-30 (GKQKKKKWSKG) are enriched in basic residues.

This sequence belongs to the eukaryotic ribosomal protein eS25 family.

The protein is Small ribosomal subunit protein eS25 (RPS25) of Amaranthus cruentus (Purple amaranth).